Reading from the N-terminus, the 154-residue chain is Aspartate carbamoyltransferase regulatory chain (154 aa).

4 residues coordinate Zn(2+): Cys-109, Cys-114, Cys-138, and Cys-141.

Belongs to the PyrI family. As to quaternary structure, contains catalytic and regulatory chains. Zn(2+) serves as cofactor.

Its function is as follows. Involved in allosteric regulation of aspartate carbamoyltransferase. This chain is Aspartate carbamoyltransferase regulatory chain, found in Methanothrix thermoacetophila (strain DSM 6194 / JCM 14653 / NBRC 101360 / PT) (Methanosaeta thermophila).